The following is a 782-amino-acid chain: Endonuclease MutS2 (782 aa).

ATP is bound at residue 336-343 (GPNTGGKT). The Smr domain maps to 707 to 782 (LDLRGYRYEE…GFGVTVAELK (76 aa)).

The protein belongs to the DNA mismatch repair MutS family. MutS2 subfamily. Homodimer. Binds to stalled ribosomes, contacting rRNA.

Endonuclease that is involved in the suppression of homologous recombination and thus may have a key role in the control of bacterial genetic diversity. In terms of biological role, acts as a ribosome collision sensor, splitting the ribosome into its 2 subunits. Detects stalled/collided 70S ribosomes which it binds and splits by an ATP-hydrolysis driven conformational change. Acts upstream of the ribosome quality control system (RQC), a ribosome-associated complex that mediates the extraction of incompletely synthesized nascent chains from stalled ribosomes and their subsequent degradation. Probably generates substrates for RQC. The chain is Endonuclease MutS2 from Staphylococcus epidermidis (strain ATCC 35984 / DSM 28319 / BCRC 17069 / CCUG 31568 / BM 3577 / RP62A).